Consider the following 132-residue polypeptide: Small ribosomal subunit protein uS8c (132 aa).

This sequence belongs to the universal ribosomal protein uS8 family. Part of the 30S ribosomal subunit.

It localises to the plastid. The protein resides in the chloroplast. One of the primary rRNA binding proteins, it binds directly to 16S rRNA central domain where it helps coordinate assembly of the platform of the 30S subunit. The chain is Small ribosomal subunit protein uS8c (rps8) from Anthoceros angustus (Hornwort).